The sequence spans 217 residues: GrpE protein homolog 1, mitochondrial (217 aa).

The transit peptide at 1–27 (MAAQCVRLARRSLPALALSLRPSPRLL) directs the protein to the mitochondrion. The tract at residues 29–56 (TATKQKNSGQNLEEDMGQSEQKADPPAT) is disordered. The span at 30–39 (ATKQKNSGQN) shows a compositional bias: polar residues. K94 carries the N6-acetyllysine; alternate modification. K94 carries the post-translational modification N6-succinyllysine; alternate. K100 bears the N6-acetyllysine mark. Position 120 is an N6-succinyllysine (K120). An N6-acetyllysine; alternate modification is found at K215. N6-succinyllysine; alternate is present on K215.

It belongs to the GrpE family. Probable component of the PAM complex at least composed of a mitochondrial HSP70 protein, GRPEL1 or GRPEL2, TIMM44, TIMM16/PAM16 and TIMM14/DNAJC19. Binds to HSP70, HSC70 and HSJ1B.

The protein localises to the mitochondrion matrix. Essential component of the PAM complex, a complex required for the translocation of transit peptide-containing proteins from the inner membrane into the mitochondrial matrix in an ATP-dependent manner. Seems to control the nucleotide-dependent binding of mitochondrial HSP70 to substrate proteins. The sequence is that of GrpE protein homolog 1, mitochondrial (GRPEL1) from Homo sapiens (Human).